Reading from the N-terminus, the 354-residue chain is Elongation factor Ts (354 aa).

The involved in Mg(2+) ion dislocation from EF-Tu stretch occupies residues 81–84; it reads TDFV.

It belongs to the EF-Ts family.

It localises to the cytoplasm. Associates with the EF-Tu.GDP complex and induces the exchange of GDP to GTP. It remains bound to the aminoacyl-tRNA.EF-Tu.GTP complex up to the GTP hydrolysis stage on the ribosome. The chain is Elongation factor Ts from Campylobacter fetus subsp. fetus (strain 82-40).